Reading from the N-terminus, the 91-residue chain is Large ribosomal subunit protein bL27 (91 aa).

The span at 1–10 (MAQKKGGGST) shows a compositional bias: gly residues. Residues 1–20 (MAQKKGGGSTRNGRDSQPKM) are disordered.

It belongs to the bacterial ribosomal protein bL27 family.

The protein is Large ribosomal subunit protein bL27 of Verminephrobacter eiseniae (strain EF01-2).